A 296-amino-acid polypeptide reads, in one-letter code: Protoheme IX farnesyltransferase (296 aa).

At 1-9 (MMFKQYLQV) the chain is on the cytoplasmic side. Residues 10–28 (TKPGIIFGNLISVIGGFLL) form a helical membrane-spanning segment. The Periplasmic segment spans residues 29–37 (ASKGSIDYP). A helical transmembrane segment spans residues 38–56 (LFIYTLVGVSLVVASGCVF). The Cytoplasmic portion of the chain corresponds to 57-78 (NNYIDRDIDRKMERTKNRVLVK). The chain crosses the membrane as a helical span at residues 79–97 (GLISPGVSLVYATLLGIAG). Residues 98 to 107 (FMLLWFGANP) lie on the Periplasmic side of the membrane. A helical transmembrane segment spans residues 108–126 (LACWLGVMGFVVYVGVYSL). Residues 127-197 (YMKRHSVYGT…YQAANIPVLP (71 aa)) are Cytoplasmic-facing. A helical transmembrane segment spans residues 198–216 (VVKGISVAKNHITLYIIAF). Over 217–228 (AVATLMLTLGGY) the chain is Periplasmic. The helical transmembrane segment at 229 to 247 (AGYKYLVVAAAVSVWWLGM) threads the bilayer. Residues 248–268 (ALRGYKVEDDKVWARKLFGFS) are Cytoplasmic-facing. Residues 269 to 287 (IIAITALSIMMSVDFMVPN) form a helical membrane-spanning segment. The Periplasmic segment spans residues 288 to 296 (SQNLLTYVW).

The protein belongs to the UbiA prenyltransferase family. Protoheme IX farnesyltransferase subfamily.

Its subcellular location is the cell inner membrane. It catalyses the reaction heme b + (2E,6E)-farnesyl diphosphate + H2O = Fe(II)-heme o + diphosphate. It functions in the pathway porphyrin-containing compound metabolism; heme O biosynthesis; heme O from protoheme: step 1/1. In terms of biological role, converts heme B (protoheme IX) to heme O by substitution of the vinyl group on carbon 2 of heme B porphyrin ring with a hydroxyethyl farnesyl side group. The sequence is that of Protoheme IX farnesyltransferase from Salmonella typhimurium (strain LT2 / SGSC1412 / ATCC 700720).